The chain runs to 194 residues: MAASHTLWMGLVLLGVLGVLQTRAQAQPSLQPNFQQDKFLGRWFTSGLASNSSWFREKKKVLSMCTSVVAPTADGGFNLTSTFLRKDQCETRTLLLQPAGPPGCYSYTSPHWGMVHEVSVVETDYEEYALLYTHAESTKGLGGQDFRMATLYSRVQSPRPEVKEKFSTFAKAQGFTEDAIVFLPQTDKCMEEHN.

The signal sequence occupies residues 1–24; sequence MAASHTLWMGLVLLGVLGVLQTRA. Position 25 is a pyrrolidone carboxylic acid (Q25). N51 carries N-linked (GlcNAc...) asparagine glycosylation. The Nucleophile role is filled by C65. N-linked (GlcNAc...) asparagine glycosylation occurs at N78. The cysteines at positions 89 and 189 are disulfide-linked.

Belongs to the calycin superfamily. Lipocalin family. In terms of assembly, monomer. In the male reproductive system, it is expressed in the testis and epididymis, and is secreted into the seminal fluid.

It is found in the rough endoplasmic reticulum. It localises to the nucleus membrane. The protein resides in the golgi apparatus. Its subcellular location is the cytoplasm. The protein localises to the perinuclear region. It is found in the secreted. It catalyses the reaction prostaglandin H2 = prostaglandin D2. Functionally, catalyzes the conversion of PGH2 to PGD2, a prostaglandin involved in smooth muscle contraction/relaxation and a potent inhibitor of platelet aggregation. Involved in a variety of CNS functions, such as sedation, NREM sleep and PGE2-induced allodynia, and may have an anti-apoptotic role in oligodendrocytes. Binds small non-substrate lipophilic molecules, including biliverdin, bilirubin, retinal, retinoic acid and thyroid hormone, and may act as a scavenger for harmful hydrophobic molecules and as a secretory retinoid and thyroid hormone transporter. Possibly involved in development and maintenance of the blood-brain, blood-retina, blood-aqueous humor and blood-testis barrier. It is likely to play important roles in both maturation and maintenance of the central nervous system and male reproductive system. Involved in PLA2G3-dependent maturation of mast cells. PLA2G3 is secreted by immature mast cells and acts on nearby fibroblasts upstream to PTDGS to synthesize PGD2, which in turn promotes mast cell maturation and degranulation via PTGDR. In Equus caballus (Horse), this protein is Prostaglandin-H2 D-isomerase (PTGDS).